The sequence spans 185 residues: Acireductone dioxygenase (185 aa).

Residues 1–22 (MSRLSIHPEGSTNATSPAEPLL) form a disordered region. Fe(2+)-binding residues include H102, H104, E108, and H146. Ni(2+) is bound by residues H102, H104, E108, and H146.

Belongs to the acireductone dioxygenase (ARD) family. In terms of assembly, monomer. Requires Fe(2+) as cofactor. The cofactor is Ni(2+).

It carries out the reaction 1,2-dihydroxy-5-(methylsulfanyl)pent-1-en-3-one + O2 = 3-(methylsulfanyl)propanoate + CO + formate + 2 H(+). The catalysed reaction is 1,2-dihydroxy-5-(methylsulfanyl)pent-1-en-3-one + O2 = 4-methylsulfanyl-2-oxobutanoate + formate + 2 H(+). It functions in the pathway amino-acid biosynthesis; L-methionine biosynthesis via salvage pathway; L-methionine from S-methyl-5-thio-alpha-D-ribose 1-phosphate: step 5/6. In terms of biological role, catalyzes 2 different reactions between oxygen and the acireductone 1,2-dihydroxy-3-keto-5-methylthiopentene (DHK-MTPene) depending upon the metal bound in the active site. Fe-containing acireductone dioxygenase (Fe-ARD) produces formate and 2-keto-4-methylthiobutyrate (KMTB), the alpha-ketoacid precursor of methionine in the methionine recycle pathway. Ni-containing acireductone dioxygenase (Ni-ARD) produces methylthiopropionate, carbon monoxide and formate, and does not lie on the methionine recycle pathway. In Prochlorococcus marinus (strain MIT 9313), this protein is Acireductone dioxygenase.